We begin with the raw amino-acid sequence, 202 residues long: Endothelin-1 (202 aa).

Residues 1–25 form the signal peptide; the sequence is MDYFPVIFSLLFVAFQGAPETAVLG. Residues 26–50 constitute a propeptide that is removed on maturation; it reads AELSPRAEKEVQSPPPSTSWRPRRS. The segment at 28-47 is disordered; it reads LSPRAEKEVQSPPPSTSWRP. 2 cysteine pairs are disulfide-bonded: C53–C67 and C55–C63. Residues 74-202 constitute a propeptide that is removed on maturation; it reads VNTPERVVPY…DQKLIHNRAH (129 aa). The interval 110–124 is endothelin-like; the sequence is CQCAHQKDKKCWNFC.

The protein belongs to the endothelin/sarafotoxin family.

It localises to the secreted. Endothelins are endothelium-derived vasoconstrictor peptides. Probable ligand for G-protein coupled receptors EDNRA and EDNRB which activates PTK2B, BCAR1, BCAR3 and, GTPases RAP1 and RHOA cascade in glomerular mesangial cells. Also binds the DEAR/FBXW7-AS1 receptor. Promotes mesenteric arterial wall remodeling via activation of ROCK signaling and subsequent colocalization of NFATC3 with F-actin filaments. NFATC3 then translocates to the nucleus where it subsequently promotes the transcription of the smooth muscle hypertrophy and differentiation marker ACTA2. This Rattus norvegicus (Rat) protein is Endothelin-1 (Edn1).